The following is a 73-amino-acid chain: MNNTSTMIEFTGKFWTYFTLVFMMLIIGFFFVITSLVAAILNKLCDLNDHHTNSLDIRTGLRNDTQSITRAHV.

The Intravirion portion of the chain corresponds to 1–19 (MNNTSTMIEFTGKFWTYFT). A helical; Signal-anchor for type II membrane protein transmembrane segment spans residues 20 to 40 (LVFMMLIIGFFFVITSLVAAI). Residues 41-73 (LNKLCDLNDHHTNSLDIRTGLRNDTQSITRAHV) lie on the Virion surface side of the membrane. The N-linked (GlcNAc...) asparagine; by host glycan is linked to Asn-63.

Belongs to the orthopneumovirus small hydrophobic protein family. As to quaternary structure, homopentamer forming a funnel-like pore. Interacts with glycoprotein G; this interaction occurs on the surface of virion particles and infected cells. Interacts with host BCAP31 (via C-terminus); this interaction is direct. In terms of processing, four species of SH have been detected in infected cell cytoplasm: a 7.5 kDa non-glycosylated form (SH0), a 13-15 kDa form that contains one or two N-linked carbohydrate side chains of the high-mannose type (SHg), a 21-30 kDa polylactosaminoglycan-modified form of the protein (SHp), and the isoform generated by alternative translational initiation. Of these different forms, SH0 is by far the most abundant protein detected during virus infection. Tyrosine phosphorylated.

It localises to the virion membrane. Its subcellular location is the host cell membrane. The protein localises to the host Golgi apparatus membrane. The protein resides in the host endoplasmic reticulum membrane. Channel activity is inhibited by copper. Also inhibited by small-molecule pyronin B. Functionally, viroporin that forms a homopentameric ion channel displaying low ion selectivity. May play a role in virus morphogenesis and pathogenicity at various stages of the viral life cycle. Accumulates at the membrane of the Golgi apparatus in infected cells and may facilitate virus release by modifying the secretory pathway. May enhance host membrane permeability and disrupt cellular ion homeostasis, which can be sensed as damage-associated molecular patterns/danger signals, triggering NLRP3 inflammasome activation and inflammatory immune response. Also inhibits host TNFA-mediated signaling pathway and may delay apoptosis, allowing time for the virus to replicate. In Bovine respiratory syncytial virus (strain A51908) (BRS), this protein is Small hydrophobic protein (SH).